The chain runs to 368 residues: Protein 5 (368 aa).

The protein is Protein 5 of Lettuce big-vein associated virus (isolate Japan/Kagawa) (LBVaV).